We begin with the raw amino-acid sequence, 527 residues long: Amine oxidase [flavin-containing] A (527 aa).

M1 is modified (N-acetylmethionine). Topologically, residues 1 to 497 (MESLQKTSDA…PSFWERNLPS (497 aa)) are cytoplasmic. Position 383 is a phosphoserine (S383). C406 bears the S-8alpha-FAD cysteine mark. Residues 498–518 (VSGLLKIVGFSTSITALWFVM) traverse the membrane as a helical; Anchor for type IV membrane protein segment. The Mitochondrial intermembrane segment spans residues 519–527 (YRFRLLSRS). Positions 520-522 (RFR) are interaction with membrane phospholipid headgroups.

It belongs to the flavin monoamine oxidase family. In terms of assembly, monomer, homo- or heterodimer (containing two subunits of similar size). Each subunit contains a covalently bound flavin. Enzymatically active as monomer. FAD serves as cofactor.

Its subcellular location is the mitochondrion outer membrane. It carries out the reaction a secondary aliphatic amine + O2 + H2O = a primary amine + an aldehyde + H2O2. It catalyses the reaction a primary methyl amine + O2 + H2O = an aldehyde + H2O2 + NH4(+). The enzyme catalyses (R)-adrenaline + O2 + H2O = (R)-3,4-dihydroxymandelaldehyde + methylamine + H2O2. The catalysed reaction is dopamine + O2 + H2O = 3,4-dihydroxyphenylacetaldehyde + H2O2 + NH4(+). It carries out the reaction tyramine + O2 + H2O = (4-hydroxyphenyl)acetaldehyde + H2O2 + NH4(+). It catalyses the reaction (R)-noradrenaline + O2 + H2O = (R)-3,4-dihydroxymandelaldehyde + H2O2 + NH4(+). The enzyme catalyses serotonin + O2 + H2O = (5-hydroxyindol-3-yl)acetaldehyde + H2O2 + NH4(+). The catalysed reaction is kynuramine + O2 + H2O = 3-(2-aminophenyl)-3-oxopropanal + H2O2 + NH4(+). It carries out the reaction tryptamine + O2 + H2O = indole-3-acetaldehyde + H2O2 + NH4(+). It catalyses the reaction 2-phenylethylamine + O2 + H2O = 2-phenylacetaldehyde + H2O2 + NH4(+). Catalyzes the oxidative deamination of primary and some secondary amine such as neurotransmitters, with concomitant reduction of oxygen to hydrogen peroxide and has important functions in the metabolism of neuroactive and vasoactive amines in the central nervous system and peripheral tissues. Preferentially oxidizes serotonin. Also catalyzes the oxidative deamination of kynuramine to 3-(2-aminophenyl)-3-oxopropanal that can spontaneously condense to 4-hydroxyquinoline. In Bos taurus (Bovine), this protein is Amine oxidase [flavin-containing] A.